A 474-amino-acid polypeptide reads, in one-letter code: MFS transporter SAT21 (474 aa).

The next 6 helical transmembrane spans lie at L7–P27, L64–F84, C101–F121, L131–A151, F162–T182, and L189–M209. Residues K220–P252 form a disordered region. Positions V222–G244 are enriched in polar residues. N-linked (GlcNAc...) asparagine glycosylation is present at N238. The next 6 membrane-spanning stretches (helical) occupy residues F276–F296, L315–T335, I346–W366, F374–V394, S406–M426, and F445–L465.

This sequence belongs to the major facilitator superfamily.

The protein localises to the cell membrane. Functionally, MFS transporter; part of the satratoxin SC3 cluster involved in the biosynthesis of satratoxins, trichothecene mycotoxins that are associated with human food poisonings. Satratoxins are suggested to be made by products of multiple gene clusters (SC1, SC2 and SC3) that encode 21 proteins in all, including polyketide synthases, acetyltransferases, and other enzymes expected to modify the trichothecene skeleton. SC1 encodes 10 proteins, SAT1 to SAT10. The largest are SAT8, which encodes a putative polyketide synthase (PKS) with a conventional non-reducing architecture, and SAT10, a putative protein containing four ankyrin repeats and thus may be involved in protein scaffolding. The putative short-chain reductase SAT3 may assist the PKS in some capacity. SAT6 contains a secretory lipase domain and acts probably as a trichothecene esterase. SAT5 encodes a putative acetyltransferase, and so, with SAT6, may affect endogenous protection from toxicity. The probable transcription factor SAT9 may regulate the expression of the SC1 cluster. SC2 encodes proteins SAT11 to SAT16, the largest of which encodes the putative reducing PKS SAT13. SAT11 is a cytochrome P450 monooxygenase, while SAT14 and SAT16 are probable acetyltransferases. The SC2 cluster may be regulated by the transcription factor SAT15. SC3 is a small cluster that encodes 5 proteins, SAT17 to SAT21. SAT21 is a putative MFS-type transporter which may have a role in exporting secondary metabolites. The four other proteins putatively encoded in SC3 include the taurine hydroxylase-like protein SAT17, the O-methyltransferase SAT18, the acetyltransferase SAT19, and the Cys6-type zinc finger SAT20, the latter being probably involved in regulation of SC3 expression. The chain is MFS transporter SAT21 from Stachybotrys chartarum (strain CBS 109288 / IBT 7711) (Toxic black mold).